Reading from the N-terminus, the 337-residue chain is Glyceraldehyde-3-phosphate dehydrogenase (337 aa).

NAD(+)-binding positions include 13-14 (RI), D35, and K80. D-glyceraldehyde 3-phosphate contacts are provided by residues 151 to 153 (SCT), T182, 211 to 212 (TG), and R234. The Nucleophile role is filled by C152. Position 316 (N316) interacts with NAD(+).

Belongs to the glyceraldehyde-3-phosphate dehydrogenase family. Homotetramer.

Its subcellular location is the cytoplasm. It catalyses the reaction D-glyceraldehyde 3-phosphate + phosphate + NAD(+) = (2R)-3-phospho-glyceroyl phosphate + NADH + H(+). Its pathway is carbohydrate degradation; glycolysis; pyruvate from D-glyceraldehyde 3-phosphate: step 1/5. The protein is Glyceraldehyde-3-phosphate dehydrogenase (GAPD) of Mycosarcoma maydis (Corn smut fungus).